Reading from the N-terminus, the 136-residue chain is 6,7-dimethyl-8-ribityllumazine synthase (136 aa).

Residues F11, 43–45 (SFD), and 67–69 (AVI) each bind 5-amino-6-(D-ribitylamino)uracil. 72–73 (ET) provides a ligand contact to (2S)-2-hydroxy-3-oxobutyl phosphate. H75 acts as the Proton donor in catalysis. 5-amino-6-(D-ribitylamino)uracil is bound at residue L100. R115 is a (2S)-2-hydroxy-3-oxobutyl phosphate binding site.

Belongs to the DMRL synthase family.

It carries out the reaction (2S)-2-hydroxy-3-oxobutyl phosphate + 5-amino-6-(D-ribitylamino)uracil = 6,7-dimethyl-8-(1-D-ribityl)lumazine + phosphate + 2 H2O + H(+). Its pathway is cofactor biosynthesis; riboflavin biosynthesis; riboflavin from 2-hydroxy-3-oxobutyl phosphate and 5-amino-6-(D-ribitylamino)uracil: step 1/2. Its function is as follows. Catalyzes the formation of 6,7-dimethyl-8-ribityllumazine by condensation of 5-amino-6-(D-ribitylamino)uracil with 3,4-dihydroxy-2-butanone 4-phosphate. This is the penultimate step in the biosynthesis of riboflavin. This chain is 6,7-dimethyl-8-ribityllumazine synthase, found in Picrophilus torridus (strain ATCC 700027 / DSM 9790 / JCM 10055 / NBRC 100828 / KAW 2/3).